The chain runs to 179 residues: Small ribosomal subunit protein uS7 (179 aa).

Belongs to the universal ribosomal protein uS7 family. Part of the 30S ribosomal subunit. Contacts proteins S9 and S11.

One of the primary rRNA binding proteins, it binds directly to 16S rRNA where it nucleates assembly of the head domain of the 30S subunit. Is located at the subunit interface close to the decoding center, probably blocks exit of the E-site tRNA. This is Small ribosomal subunit protein uS7 from Shigella flexneri serotype 5b (strain 8401).